Here is a 222-residue protein sequence, read N- to C-terminus: Putative N-acetylmannosamine-6-phosphate 2-epimerase (222 aa).

The protein belongs to the NanE family.

The enzyme catalyses an N-acyl-D-glucosamine 6-phosphate = an N-acyl-D-mannosamine 6-phosphate. It participates in amino-sugar metabolism; N-acetylneuraminate degradation; D-fructose 6-phosphate from N-acetylneuraminate: step 3/5. Functionally, converts N-acetylmannosamine-6-phosphate (ManNAc-6-P) to N-acetylglucosamine-6-phosphate (GlcNAc-6-P). In Staphylococcus aureus (strain MSSA476), this protein is Putative N-acetylmannosamine-6-phosphate 2-epimerase.